The primary structure comprises 77 residues: Translation initiation factor IF-1, chloroplastic (77 aa).

An S1-like domain is found at 1-71; it reads MKEQKLIHEG…TRGRIIYRLR (71 aa).

It belongs to the IF-1 family. As to quaternary structure, component of the 30S ribosomal translation pre-initiation complex which assembles on the 30S ribosome in the order IF-2 and IF-3, IF-1 and N-formylmethionyl-tRNA(fMet); mRNA recruitment can occur at any time during PIC assembly.

The protein localises to the plastid. Its subcellular location is the chloroplast. Its function is as follows. One of the essential components for the initiation of protein synthesis. Stabilizes the binding of IF-2 and IF-3 on the 30S subunit to which N-formylmethionyl-tRNA(fMet) subsequently binds. Helps modulate mRNA selection, yielding the 30S pre-initiation complex (PIC). Upon addition of the 50S ribosomal subunit IF-1, IF-2 and IF-3 are released leaving the mature 70S translation initiation complex. This is Translation initiation factor IF-1, chloroplastic from Asarum canadense (Wild ginger).